A 375-amino-acid chain; its full sequence is Guanine nucleotide-binding protein subunit beta (375 aa).

WD repeat units lie at residues 63-93, 105-135, 154-185, 202-233, 246-276, 293-323, and 339-369; these read GHTG…IVWN, LPCA…SIYN, GHKG…VLWD, GHTA…RLWD, GHEG…RLFD, GDIP…YVWD, and SHEG…KIWA.

Belongs to the WD repeat G protein beta family. As to quaternary structure, g proteins are composed of 3 units, alpha, beta and gamma.

In terms of biological role, guanine nucleotide-binding proteins (G proteins) are involved as a modulator or transducer in various transmembrane signaling systems. The beta and gamma chains are required for the GTPase activity, for replacement of GDP by GTP, and for G protein-effector interaction. This chain is Guanine nucleotide-binding protein subunit beta, found in Nicotiana tabacum (Common tobacco).